A 274-amino-acid chain; its full sequence is Diaminopimelate epimerase (274 aa).

Substrate is bound by residues N11, Q44, and N64. The Proton donor role is filled by C73. Substrate contacts are provided by residues 74–75, N157, N190, and 208–209; these read GN and ER. The active-site Proton acceptor is the C217. A substrate-binding site is contributed by 218–219; that stretch reads GS.

It belongs to the diaminopimelate epimerase family. Homodimer.

The protein resides in the cytoplasm. The enzyme catalyses (2S,6S)-2,6-diaminopimelate = meso-2,6-diaminopimelate. It participates in amino-acid biosynthesis; L-lysine biosynthesis via DAP pathway; DL-2,6-diaminopimelate from LL-2,6-diaminopimelate: step 1/1. Catalyzes the stereoinversion of LL-2,6-diaminopimelate (L,L-DAP) to meso-diaminopimelate (meso-DAP), a precursor of L-lysine and an essential component of the bacterial peptidoglycan. The protein is Diaminopimelate epimerase of Yersinia enterocolitica serotype O:8 / biotype 1B (strain NCTC 13174 / 8081).